A 126-amino-acid chain; its full sequence is Large ribosomal subunit protein bL12 (126 aa).

The protein belongs to the bacterial ribosomal protein bL12 family. In terms of assembly, homodimer. Part of the ribosomal stalk of the 50S ribosomal subunit. Forms a multimeric L10(L12)X complex, where L10 forms an elongated spine to which 2 to 4 L12 dimers bind in a sequential fashion. Binds GTP-bound translation factors.

Forms part of the ribosomal stalk which helps the ribosome interact with GTP-bound translation factors. Is thus essential for accurate translation. The chain is Large ribosomal subunit protein bL12 from Methylorubrum populi (strain ATCC BAA-705 / NCIMB 13946 / BJ001) (Methylobacterium populi).